The sequence spans 52 residues: Protein RepA (52 aa).

A DNA-binding region (H-T-H motif) is located at residues 20 to 40 (KLEELAQKYGMTKSGLVNFLV).

Belongs to the transcriptional regulatory CopG/NikR family. In terms of assembly, homodimer.

Its function is as follows. Regulates the plasmid copy number. RepA binds to the repAB promoter thus controlling the synthesis of the plasmid replication initiator protein RepB. The polypeptide is Protein RepA (repA) (Lactiplantibacillus plantarum (Lactobacillus plantarum)).